The following is a 204-amino-acid chain: Protein GET1 (204 aa).

Residues 1–4 lie on the Lumenal side of the membrane; the sequence is MPSL. The chain crosses the membrane as a helical span at residues 5–24; it reads LLIIFVTELVVQLVNTLGAT. Residues 25 to 110 are Cytoplasmic-facing; it reads TINDLLWRIY…KFDRTLTTTR (86 aa). The stretch at 72–107 forms a coiled coil; the sequence is AKWAKLRRQHDKLLEDLEKKKASLEAARTKFDRTLT. The chain crosses the membrane as a helical span at residues 111 to 131; sequence TVSTRSVQWFLPFWYSKEPMF. Over 132–155 the chain is Lumenal; sequence WLPYGWFPYYVEWFASFPRAPMGS. The helical transmembrane segment at 156 to 172 threads the bilayer; it reads VSIVVWQWACTAVIALM. Residues 173 to 204 lie on the Cytoplasmic side of the membrane; that stretch reads IEAATAALVYVAAKQSQKIRQPVPAQSEKKDS.

This sequence belongs to the WRB/GET1 family. Interacts with GET3.

The protein resides in the endoplasmic reticulum membrane. Its function is as follows. Required for the post-translational delivery of tail-anchored (TA) proteins to the endoplasmic reticulum. Acts as a membrane receptor for soluble GET3, which recognizes and selectively binds the transmembrane domain of TA proteins in the cytosol. This chain is Protein GET1, found in Podospora anserina (strain S / ATCC MYA-4624 / DSM 980 / FGSC 10383) (Pleurage anserina).